A 113-amino-acid chain; its full sequence is Hydrogenase maturation factor HybF (113 aa).

Ni(2+)-binding residues include His-2 and Glu-3. Zn(2+)-binding residues include Cys-73, Cys-76, Cys-89, and Cys-92.

This sequence belongs to the HypA/HybF family. HybF subfamily.

Involved in the maturation of [NiFe] hydrogenases. Required for nickel insertion into the metal center of the hydrogenase. The protein is Hydrogenase maturation factor HybF of Proteus vulgaris.